The chain runs to 215 residues: MSVPQIQVEEVSEKDRPAGAAVPPDDHLLSLKALTEKLRLETRRPSYLEWQARLEEQTWPFPRPAAQQEASLEQGACGGGEPLMPLKEPRDLLPPSASAGRGDRPLTTGKLEGFQSIDEAIAWLRKELAEMRLQDQQLARQLMRLRGDINKLKIEQTCRLHRRMLNDAAFELEERDELSDLFCDSPLASSFSLSMPLKLIGVTKMNINSRRFSLC.

Disordered stretches follow at residues 1–26 (MSVPQIQVEEVSEKDRPAGAAVPPDD) and 63–109 (RPAA…LTTG). Residues 124-157 (LRKELAEMRLQDQQLARQLMRLRGDINKLKIEQT) adopt a coiled-coil conformation.

The protein belongs to the FAM167 (SEC) family.

This chain is Protein FAM167A (Fam167a), found in Mus musculus (Mouse).